Consider the following 90-residue polypeptide: uncharacterized protein (90 aa).

Residues 62–90 form a disordered region; sequence RQLKKKQAYKPDPEASFSWSANTSTRGRR. A compositionally biased stretch (polar residues) spans 78–90; sequence FSWSANTSTRGRR.

This is an uncharacterized protein from Escherichia coli (strain K12).